A 523-amino-acid polypeptide reads, in one-letter code: Pituitary adenylate cyclase-activating polypeptide type I receptor (523 aa).

Positions 1 to 19 (MARVLQLSLTALLLPVAIA) are cleaved as a signal peptide. Topologically, residues 20 to 151 (MHSDCIFKKE…SGDQDYYYLS (132 aa)) are extracellular. 3 cysteine pairs are disulfide-bonded: Cys-33/Cys-62, Cys-53/Cys-117, and Cys-76/Cys-133. Asn-47, Asn-59, and Asn-116 each carry an N-linked (GlcNAc...) asparagine glycan. The interval 124 to 138 (EPFPHYFDACGFDDY) is important for ADCYAP1/PACAP ligand binding and specificity. The segment at 124 to 138 (EPFPHYFDACGFDDY) is important for ligand binding and specificity. A helical transmembrane segment spans residues 152–176 (VKALYTVGYSTSLATLTTAMVILCR). Over 177–186 (FRKLHCTRNF) the chain is Cytoplasmic. Residues 187–207 (IHMNLFVSFMLRAISVFIKDW) traverse the membrane as a helical segment. At 208 to 222 (ILYAEQDSSHCFVST) the chain is on the extracellular side. Residues 223–248 (VECKAVMVFFHYCVVSNYFWLFIEGL) traverse the membrane as a helical segment. Cys-225 and Cys-295 are oxidised to a cystine. Over 249–266 (YLFTLLVETFFPERRYFY) the chain is Cytoplasmic. A helical transmembrane segment spans residues 267-289 (WYTIIGWGTPTVCVTVWAVLRLY). Residues 290 to 301 (FDDAGCWDMNDS) are Extracellular-facing. Residues 302–328 (TALWWVIKGPVVGSIMVNFVLFIGIII) traverse the membrane as a helical segment. Residues 329-346 (ILVQKLQSPDMGGNESSI) are Cytoplasmic-facing. A helical transmembrane segment spans residues 347–429 (YLTNLRLRVP…HYTVFAFSPE (83 aa)). The Extracellular portion of the chain corresponds to 430–434 (NVSKR). A helical transmembrane segment spans residues 435 to 458 (ERLVFELGLGSFQGFVVAVLYCFL). Residues 459-523 (NGEVQAEIKR…SSLPADNLAT (65 aa)) are Cytoplasmic-facing. A phosphoserine mark is found at Ser-489 and Ser-502.

It belongs to the G-protein coupled receptor 2 family. Interacts with maxadilan, a vasodilator peptide from Lutzomyia longipalpis saliva; the interaction results in ADCYAP1R1 activation. Hypothalamus, anterior pituitary, adrenal medulla, testicular germ cells.

It is found in the cell membrane. Its function is as follows. G protein-coupled receptor activated by the neuropeptide pituitary adenylate cyclase-activating polypeptide (ADCYAP1/PACAP). Binds both PACAP27 and PACAP38 bioactive peptides. Ligand binding causes a conformation change that triggers signaling via guanine nucleotide-binding proteins (G proteins) and modulates the activity of downstream effectors. Activates cAMP-dependent pathway. May regulate the release of adrenocorticotropin, luteinizing hormone, growth hormone, prolactin, epinephrine, and catecholamine. May play a role in spermatogenesis and sperm motility. Causes smooth muscle relaxation and secretion in the gastrointestinal tract. The chain is Pituitary adenylate cyclase-activating polypeptide type I receptor from Rattus norvegicus (Rat).